A 184-amino-acid chain; its full sequence is MNWRSERIWIELITGSRKTSNFCWAFILFLGSLGFLLVGTSSYLGRNLISLFPSQQIIFFPQGIVMSFYGIAGLFISSYLWCTISWNVGSGYDRFDRKEGIVCIFRWGFPGKNRRIFLRFFMKDIQSIRIEVKEGLYPRRVLYMEIRGQGAIPLTRTDENLTPREIEQKAAELAYFLRVPIEVF.

The next 2 membrane-spanning stretches (helical) occupy residues 22–42 (FCWA…GTSS) and 57–77 (IIFF…LFIS).

Belongs to the Ycf4 family.

It is found in the plastid. The protein resides in the chloroplast thylakoid membrane. Its function is as follows. Seems to be required for the assembly of the photosystem I complex. The protein is Photosystem I assembly protein Ycf4 of Platanus occidentalis (Sycamore).